Reading from the N-terminus, the 660-residue chain is MGLQTAKWPSHGTFVLKFWLIMSLGLYSHVSKLLACPSVCRCDRNFVYCNERSLTSVPLGIPEGVTVLYLHNNQINNAGFPAELHNVQSVHTVYLYGNQLDEFPMNLPKNVRVLHLQENNIQTISRAALAQLLKLEELHLDDNSISTVGVEDGAFREAISLKLLFLSKNHLSSVPVGLPVDLQELRVDENRIAVISDMAFQNLTSLERLIVDGNLLTNKGIADGTFSHLTKLKEFSIVRNSLSHPPPDLPGTHLIRLYLQDNQINHIPLTAFANLRKLERLDISNNQLRMLTQGVFDHLSNLKQLTARNNPWFCDCSIKWVTEWLKYIPSSLNVRGFMCQGPEQVRGMAVRELNMNLLSCPTTTPGLPVFTPAPSTVSPTTQSPTVSVPSPSRGSVPPAPAPSKLPTIPDWDGRERATPPISERIQLSIHFVNDTSIQVSWLSLFTVMAYKLTWVKMGHSLVGGIVQERIVSGEKQHLSLVNLEPRSTYRICLVPLDAFNYRTVEDTICSEATTHASYLNNGSNTASSHEQTTSHTMGSPFLLAGLIGGAVIFVLVVLLSVFCWHMHKKGRYTSQKWKYNRGRRKDDYCEAGTKKDNSILEMTETSFQIVSLNNDQLLKGDFRLQPIYTPNGGINYTDCHIPNNMRYCNSSVPDLEHCHT.

The N-terminal stretch at 1 to 35 is a signal peptide; that stretch reads MGLQTAKWPSHGTFVLKFWLIMSLGLYSHVSKLLA. 2 disulfide bridges follow: C36/C42 and C40/C49. Positions 36–67 constitute an LRRNT domain; that stretch reads CPSVCRCDRNFVYCNERSLTSVPLGIPEGVTV. Topologically, residues 36 to 540 are extracellular; it reads CPSVCRCDRN…QTTSHTMGSP (505 aa). LRR repeat units lie at residues 62–87, 88–108, 109–131, 132–157, 159–181, 183–202, 203–228, 229–251, 252–274, and 275–298; these read PEGVTVLYLHNNQINNAGFPAELHNV, QSVHTVYLYGNQLDEFPMNLP, KNVRVLHLQENNIQTISRAALAQ, LLKLEELHLDDNSISTVGVEDGAFRE, ISLKLLFLSKNHLSSVPVGLPVD, QELRVDENRIAVISDMAFQN, LTSLERLIVDGNLLTNKGIADGTFSH, LTKLKEFSIVRNSLSHPPPDLPG, THLIRLYLQDNQINHIPLTAFAN, and LRKLERLDISNNQLRMLTQGVFDH. An N-linked (GlcNAc...) asparagine glycan is attached at N202. 2 disulfide bridges follow: C314/C339 and C316/C360. One can recognise an LRRCT domain in the interval 338-361; sequence MCQGPEQVRGMAVRELNMNLLSCP. Residues 372–396 show a composition bias toward low complexity; sequence PAPSTVSPTTQSPTVSVPSPSRGSV. The segment at 372-413 is disordered; that stretch reads PAPSTVSPTTQSPTVSVPSPSRGSVPPAPAPSKLPTIPDWDG. One can recognise a Fibronectin type-III domain in the interval 419-517; the sequence is PPISERIQLS…ICSEATTHAS (99 aa). A helical membrane pass occupies residues 541–561; sequence FLLAGLIGGAVIFVLVVLLSV. Residues 562 to 660 lie on the Cytoplasmic side of the membrane; that stretch reads FCWHMHKKGR…SVPDLEHCHT (99 aa).

As to quaternary structure, self-associates (via leucine-rich repeats), giving rise to homooligomers. Interacts with FGFR1. Interacts with FGFR2. Interacts (via extracellular domain) with ADGRL1/LPHN1. Interacts (via extracellular domain) with ADGRL3 (via olfactomedin-like domain). Interacts (via extracellular domain) with UNC5D (via the first Ig-like domain). Can also interact (via extracellular domain) with UNC5B, but with much lower affinity. Interacts (via extracellular domain) with FN1. In terms of processing, N-glycosylated. Post-translationally, proteolytic cleavage in the juxtamembrane region gives rise to a soluble ectodomain. Cleavage is probably effected by a metalloprotease. Detected in brain (at protein level).

It localises to the cell membrane. It is found in the endoplasmic reticulum membrane. Its subcellular location is the synapse. The protein localises to the synaptosome. The protein resides in the cell junction. It localises to the focal adhesion. It is found in the secreted. Its subcellular location is the extracellular space. The protein localises to the extracellular matrix. The protein resides in the microsome membrane. In terms of biological role, functions in cell-cell adhesion, cell migration and axon guidance. Mediates cell-cell adhesion via its interactions with ADGRL3 and probably also other latrophilins that are expressed at the surface of adjacent cells. May play a role in the migration of cortical neurons during brain development via its interaction with UNC5D. Mediates axon growth cone collapse and plays a repulsive role in neuron guidance via its interaction with UNC5D, and possibly also other UNC-5 family members. Plays a role in fibroblast growth factor-mediated signaling cascades. Required for normal organization of the cardiac basement membrane during embryogenesis, and for normal embryonic epicardium and heart morphogenesis. This is Leucine-rich repeat transmembrane protein FLRT2 from Rattus norvegicus (Rat).